Consider the following 1033-residue polypeptide: DNA polymerase I A, chloroplastic (1033 aa).

The segment covering 1–11 (MAVAPPLPPAP) has biased composition (pro residues). Disordered stretches follow at residues 1-32 (MAVA…LSSP) and 104-142 (TNGT…PSNS). A chloroplast-targeting transit peptide spans 1–55 (MAVAPPLPPAPARQLRRWKGSSPRPPPWLSSPFRRTRYLSRPAFAAGGRQDYSPS). Over residues 115–124 (LRHDPSEDIR) the composition is skewed to basic and acidic residues. Polar residues predominate over residues 125–142 (SSNYPSLYNQRERGPSNS). The 3'-5' exonuclease domain occupies 321-482 (FGNGKTCIWV…LYESLKNKLE (162 aa)). The polymerase stretch occupies residues 696-1030 (CHAIAALCEV…VDAKYAKSWY (335 aa)).

Belongs to the DNA polymerase type-A family. In terms of tissue distribution, expressed in shoot apical meristem, root apical meristem, leaf primordia and the marginal meristem.

Its subcellular location is the plastid. The protein resides in the chloroplast. It catalyses the reaction DNA(n) + a 2'-deoxyribonucleoside 5'-triphosphate = DNA(n+1) + diphosphate. With respect to regulation, inhibited by dideoxythymidine-triphosphate (ddTTP), but not by aphidicolin and N-ethylmaleimide. In addition to polymerase activity, this DNA polymerase exhibits 5'-3' exonuclease activity. May be required for DNA replication and accumulation in plastids. In Oryza sativa subsp. japonica (Rice), this protein is DNA polymerase I A, chloroplastic.